Reading from the N-terminus, the 790-residue chain is MKGMREKTLKSLEFDKIVKLIANECDSELGREKVFDIEIKKDLKAIEFELDLLNEAVKFIYSYGDISFSFQDIREHVKKAQIDYILYNRELLGIKNFLSLVEEVKAHFKSLYDREDFLLLKEFDKRLVPLKSLKEKIENTVISEDEISDEASPVLKAIRRQKASINEKIKSTLNSIISTRQKELQEPIITMRQGRYVVPVKQEYRNVFKGIIHDQSSTGATLFIEPIQVVDLNNELRELELKEQKEIERILFELSQEVKKNAEAIFKDVEVVSELDFLFAKARYSIKIKASRPELNTSGYVNLKKARHPLIDPEKVVPIDIHIGREFTTLVITGPNTGGKTVTLKTVGLLTLMAMAGINIPAEEKSQISIFEDVFVDIGDEQSIEQSLSTFSSHMTNIVSILKKVNKNSLVLLDELGAGTDPLEGSALAMSILDFLHRTGCRTIATTHYSELKQYALKTKGVENASVEFDVETLRPTYRLIIGIPGRSNAFEISRRLGLSEEIIENAKSYMSGEAIRFEDVIKDVEEKRKDLENAYQEVERLKKEVEVLKEELEKEKRKLESQKDKILKEAKEKAREIIKEAKQTAEEVIKRIKEAEEKEKNKDRAIQEIREKIKKNLEELEEEVLKPKEFSYGKIPDSLKAGQTVYIVPLDQNGIVLSPPDASGNVEVQAGILKMTVHISNLRVKEEQEQEEVKKGYSRFINEKAKSISPSLDVRGMTLDDALLEVEKYIDDAYLAGLNQVTIIHGRGTGVLRTGIAKFLRNSKYVKSFRLGRYGEGGDGVTIVELHSR.

ATP is bound at residue 334-341 (GPNTGGKT). Residues 713-788 (LDVRGMTLDD…GDGVTIVELH (76 aa)) form the Smr domain.

The protein belongs to the DNA mismatch repair MutS family. MutS2 subfamily. In terms of assembly, homodimer. Binds to stalled ribosomes, contacting rRNA.

Endonuclease that is involved in the suppression of homologous recombination and thus may have a key role in the control of bacterial genetic diversity. In terms of biological role, acts as a ribosome collision sensor, splitting the ribosome into its 2 subunits. Detects stalled/collided 70S ribosomes which it binds and splits by an ATP-hydrolysis driven conformational change. Acts upstream of the ribosome quality control system (RQC), a ribosome-associated complex that mediates the extraction of incompletely synthesized nascent chains from stalled ribosomes and their subsequent degradation. Probably generates substrates for RQC. This Caldanaerobacter subterraneus subsp. tengcongensis (strain DSM 15242 / JCM 11007 / NBRC 100824 / MB4) (Thermoanaerobacter tengcongensis) protein is Endonuclease MutS2.